The primary structure comprises 275 residues: NADH-quinone oxidoreductase subunit E 1 (275 aa).

[2Fe-2S] cluster contacts are provided by Cys-99, Cys-104, Cys-140, and Cys-144. Residues 200–275 are disordered; it reads LQAPEPVEEK…DKSKPAKKPR (76 aa). Residues 206–221 show a composition bias toward basic and acidic residues; sequence VEEKKSVRASKAKDEQ. Polar residues predominate over residues 231–242; it reads AKPSTATDVTNP. The segment covering 243–256 has biased composition (low complexity); that stretch reads TLKTPATARKAAAK. Positions 258-269 are enriched in basic and acidic residues; sequence VKIEGETVDKSK.

Belongs to the complex I 24 kDa subunit family. [2Fe-2S] cluster is required as a cofactor.

It carries out the reaction a quinone + NADH + 5 H(+)(in) = a quinol + NAD(+) + 4 H(+)(out). Functionally, NDH-1 shuttles electrons from NADH, via FMN and iron-sulfur (Fe-S) centers, to quinones in the respiratory chain. The immediate electron acceptor for the enzyme in this species is believed to be ubiquinone. Couples the redox reaction to proton translocation (for every two electrons transferred, four hydrogen ions are translocated across the cytoplasmic membrane), and thus conserves the redox energy in a proton gradient. In Rhizobium meliloti (strain 1021) (Ensifer meliloti), this protein is NADH-quinone oxidoreductase subunit E 1 (nuoE1).